A 318-amino-acid chain; its full sequence is Olfactory receptor 5G26 (318 aa).

The Extracellular portion of the chain corresponds to 1–28 (MMHRNQTVVTEFFFTGLTSSFHLQIVLF). Asn-5 carries an N-linked (GlcNAc...) asparagine glycan. A helical membrane pass occupies residues 29 to 49 (LTFLCVYLATLLGNLGMIILI). Over 50-56 (HLDTRLH) the chain is Cytoplasmic. A helical membrane pass occupies residues 57-77 (IPMYFFLSHLSFVDACSSSVI). Residues 78 to 93 (SPKMLSDMFVDKKVIS) are Extracellular-facing. Residues 94–114 (FLGCAIQLCLFSQFVVTECFL) form a helical membrane-spanning segment. The cysteines at positions 97 and 189 are disulfide-linked. Residues 115 to 144 (LASMAYDRYVAICKPLLYTLIMSQRVCVQL) lie on the Cytoplasmic side of the membrane. The chain crosses the membrane as a helical span at residues 145–165 (VIGPYSIGFVSTMVHIISAFV). Residues 166–198 (LPYCGPNLINHFFCDLLPVLSLACANTQMKKRL) are Extracellular-facing. Residues 199–219 (LFIVAGILGVFSGIIILVSYV) traverse the membrane as a helical segment. Topologically, residues 220–239 (YIAITILKISSADGRRKAFS) are cytoplasmic. Residues 240–260 (TCSSHLTAVSILYGTLFFIYV) form a helical membrane-spanning segment. At 261 to 271 (RPSSSFSLDIN) the chain is on the extracellular side. A helical membrane pass occupies residues 272-292 (KVVSLFYTTVIPMLNPFIYSL). Topologically, residues 293–318 (RNKEVKDALIRTFEKQFCYSFQDKIL) are cytoplasmic.

Belongs to the G-protein coupled receptor 1 family.

It localises to the cell membrane. Functionally, potential odorant receptor. The chain is Olfactory receptor 5G26 from Mus musculus (Mouse).